Consider the following 215-residue polypeptide: 3-demethoxyubiquinol 3-hydroxylase (215 aa).

Positions 64, 94, 97, 146, 178, and 181 each coordinate Fe cation.

The protein belongs to the COQ7 family. Requires Fe cation as cofactor.

It localises to the cell membrane. It catalyses the reaction a 5-methoxy-2-methyl-3-(all-trans-polyprenyl)benzene-1,4-diol + AH2 + O2 = a 3-demethylubiquinol + A + H2O. It functions in the pathway cofactor biosynthesis; ubiquinone biosynthesis. Catalyzes the hydroxylation of 2-nonaprenyl-3-methyl-6-methoxy-1,4-benzoquinol during ubiquinone biosynthesis. This is 3-demethoxyubiquinol 3-hydroxylase from Pseudomonas putida (strain W619).